Consider the following 74-residue polypeptide: Acyl carrier protein (74 aa).

Residues 1–74 (MFEKVRKIIA…DVVEYIKNNS (74 aa)) form the Carrier domain. The residue at position 34 (S34) is an O-(pantetheine 4'-phosphoryl)serine.

Belongs to the acyl carrier protein (ACP) family. 4'-phosphopantetheine is transferred from CoA to a specific serine of apo-ACP by AcpS. This modification is essential for activity because fatty acids are bound in thioester linkage to the sulfhydryl of the prosthetic group.

Its subcellular location is the cytoplasm. It participates in lipid metabolism; fatty acid biosynthesis. Its function is as follows. Carrier of the growing fatty acid chain in fatty acid biosynthesis. This is Acyl carrier protein from Acetivibrio thermocellus (strain ATCC 27405 / DSM 1237 / JCM 9322 / NBRC 103400 / NCIMB 10682 / NRRL B-4536 / VPI 7372) (Clostridium thermocellum).